Reading from the N-terminus, the 450-residue chain is 23S rRNA (uracil(1939)-C(5))-methyltransferase RlmD (450 aa).

Residues Ser-12–Lys-70 form the TRAM domain. [4Fe-4S] cluster-binding residues include Cys-83, Cys-89, Cys-92, and Cys-171. S-adenosyl-L-methionine contacts are provided by Gln-283, Phe-312, Asn-317, Glu-333, Asp-360, and Asp-380. Cys-406 functions as the Nucleophile in the catalytic mechanism.

Belongs to the class I-like SAM-binding methyltransferase superfamily. RNA M5U methyltransferase family. RlmD subfamily.

The catalysed reaction is uridine(1939) in 23S rRNA + S-adenosyl-L-methionine = 5-methyluridine(1939) in 23S rRNA + S-adenosyl-L-homocysteine + H(+). In terms of biological role, catalyzes the formation of 5-methyl-uridine at position 1939 (m5U1939) in 23S rRNA. The protein is 23S rRNA (uracil(1939)-C(5))-methyltransferase RlmD of Shewanella baltica (strain OS155 / ATCC BAA-1091).